We begin with the raw amino-acid sequence, 352 residues long: Phenylalanine--tRNA ligase alpha subunit (352 aa).

Residue Glu-258 coordinates Mg(2+).

This sequence belongs to the class-II aminoacyl-tRNA synthetase family. Phe-tRNA synthetase alpha subunit type 1 subfamily. Tetramer of two alpha and two beta subunits. Requires Mg(2+) as cofactor.

The protein resides in the cytoplasm. The catalysed reaction is tRNA(Phe) + L-phenylalanine + ATP = L-phenylalanyl-tRNA(Phe) + AMP + diphosphate + H(+). This Staphylococcus carnosus (strain TM300) protein is Phenylalanine--tRNA ligase alpha subunit.